The sequence spans 265 residues: 3-methyl-2-oxobutanoate hydroxymethyltransferase (265 aa).

Aspartate 43 and aspartate 82 together coordinate Mg(2+). Residues 43–44 (DS), aspartate 82, and lysine 111 each bind 3-methyl-2-oxobutanoate. Glutamate 113 lines the Mg(2+) pocket. Glutamate 180 functions as the Proton acceptor in the catalytic mechanism.

It belongs to the PanB family. Homodecamer; pentamer of dimers. Mg(2+) is required as a cofactor.

It localises to the cytoplasm. The enzyme catalyses 3-methyl-2-oxobutanoate + (6R)-5,10-methylene-5,6,7,8-tetrahydrofolate + H2O = 2-dehydropantoate + (6S)-5,6,7,8-tetrahydrofolate. Its pathway is cofactor biosynthesis; (R)-pantothenate biosynthesis; (R)-pantoate from 3-methyl-2-oxobutanoate: step 1/2. Catalyzes the reversible reaction in which hydroxymethyl group from 5,10-methylenetetrahydrofolate is transferred onto alpha-ketoisovalerate to form ketopantoate. This chain is 3-methyl-2-oxobutanoate hydroxymethyltransferase, found in Francisella tularensis subsp. mediasiatica (strain FSC147).